A 512-amino-acid polypeptide reads, in one-letter code: Histidine ammonia-lyase (512 aa).

A cross-link (5-imidazolinone (Ala-Gly)) is located at residues 142–144 (ASG). Ser-143 carries the post-translational modification 2,3-didehydroalanine (Ser).

Belongs to the PAL/histidase family. Contains an active site 4-methylidene-imidazol-5-one (MIO), which is formed autocatalytically by cyclization and dehydration of residues Ala-Ser-Gly.

Its subcellular location is the cytoplasm. It catalyses the reaction L-histidine = trans-urocanate + NH4(+). The protein operates within amino-acid degradation; L-histidine degradation into L-glutamate; N-formimidoyl-L-glutamate from L-histidine: step 1/3. This chain is Histidine ammonia-lyase, found in Allorhizobium ampelinum (strain ATCC BAA-846 / DSM 112012 / S4) (Agrobacterium vitis (strain S4)).